A 213-amino-acid polypeptide reads, in one-letter code: uncharacterized protein (213 aa).

Residues G53, E74, and D97 each coordinate S-adenosyl-L-methionine.

This sequence belongs to the methyltransferase superfamily. YrrT family.

Functionally, could be a S-adenosyl-L-methionine-dependent methyltransferase. This is an uncharacterized protein from Bacillus velezensis (strain DSM 23117 / BGSC 10A6 / LMG 26770 / FZB42) (Bacillus amyloliquefaciens subsp. plantarum).